Here is a 529-residue protein sequence, read N- to C-terminus: GTPase Obg (529 aa).

Residues 2 to 159 form the Obg domain; that stretch reads ASFVDRVVLH…SDIVLELKSI (158 aa). One can recognise an OBG-type G domain in the interval 160 to 343; the sequence is ADIALVGFPS…LGFAMAEIVK (184 aa). GTP-binding positions include 166–173, 191–195, 212–215, 295–298, and 324–326; these read GFPSAGKS, FTTLI, DVPG, NKVD, and SAT. Residues serine 173 and threonine 193 each contribute to the Mg(2+) site. The OCT domain occupies 363-447; it reads PRAVNEAGFK…DDGVVFDWEP (85 aa). Residues 466 to 502 show a composition bias toward basic and acidic residues; that stretch reads FADIGDRPTRGQKRDEQQERRDAKAAARAELEAERKA. Residues 466-529 form a disordered region; the sequence is FADIGDRPTR…ESGLTTENEE (64 aa).

The protein belongs to the TRAFAC class OBG-HflX-like GTPase superfamily. OBG GTPase family. Monomer. Requires Mg(2+) as cofactor.

The protein localises to the cytoplasm. Its function is as follows. An essential GTPase which binds GTP, GDP and possibly (p)ppGpp with moderate affinity, with high nucleotide exchange rates and a fairly low GTP hydrolysis rate. Plays a role in control of the cell cycle, stress response, ribosome biogenesis and in those bacteria that undergo differentiation, in morphogenesis control. The sequence is that of GTPase Obg from Arthrobacter sp. (strain FB24).